Here is a 96-residue protein sequence, read N- to C-terminus: MGSKIFLLLGLSIAFALLISSEVAARDLSETTTEGASLDGGHHGGGGGGHYSGGGGHGGSHHGGGGHGGCHHYCHGSCCSAAEAKALEAAQVKPQN.

Positions 1–25 (MGSKIFLLLGLSIAFALLISSEVAA) are cleaved as a signal peptide. The segment at 29–66 (SETTTEGASLDGGHHGGGGGGHYSGGGGHGGSHHGGGG) is disordered. 2 consecutive repeat copies span residues 42-50 (HHGGGGGGH) and 61-67 (HHGGGGH). The tract at residues 42–67 (HHGGGGGGHYSGGGGHGGSHHGGGGH) is 2 approximate repeats of H-H-G(4,6)-H. Residues 43–66 (HGGGGGGHYSGGGGHGGSHHGGGG) are compositionally biased toward gly residues.

The protein belongs to the GRP family.

May be connected with the initiation of embryogenesis or with the metabolic changes produced by the removal of auxins. This chain is Glycine-rich protein DC7.1, found in Daucus carota (Wild carrot).